Here is a 550-residue protein sequence, read N- to C-terminus: MLQTIPMPSRELTIALAVLSLLMVLVQRAGSRRRETKQLLSLPPSPPCANIIAGHLPTVLKAAKEHRQHLLFQKWAEEYGEVFFVQLGTIQEYFINSDQAVRAIFDKAAAQTSERPRWIVSNEQICNRLNLLLLSSSEKAWKSQRKATTFGLTNLNLADAGLPFLHFETLKFLNDIGQNPSKGADPQSLWSSIGRYTYSTFSSQIFGLDVPEDNSPVIDYIFETGLAQILGMLPGYYLVDTFNILDKLPLFLKPWERDAKSRHKRDYEWCCDKLKKVKSQIDAGEAPPHMTFIRRVIEDPNHLGLDSLEDASYLGMMLIIGASDTSRISTWSFLEAMLTFPDVCNKARKVIDSAVGDRVPVFEDLERVPYIRQVMKESWRWRPPVALGHPHTTTRDIMYKNYRIPKGARIHLNAWAIHRDPTRYPDPENFIPERFEGDTRSSQESAASPDVSKRDHFVFGAGRRICPGYHVADRSFAVSVMRILWAFDISLKPGTKLPLDPQSFPGDMPGNPGLELPVVLTVRSPERLETIQKEFEAAVQSRERMEPLVG.

The signal sequence occupies residues 1-31 (MLQTIPMPSRELTIALAVLSLLMVLVQRAGS). Residues 430 to 441 (FIPERFEGDTRS) show a composition bias toward basic and acidic residues. The segment at 430-451 (FIPERFEGDTRSSQESAASPDV) is disordered. Residue Cys466 coordinates heme.

This sequence belongs to the cytochrome P450 family.

Cytochrome P450 monooxygenase; part of the DMATS1 gene cluster that mediates the biosynthesis of a reversely N-prenylated monomeric L-tryptophan (r-N-DMAT). Seems not to contribute to the final DMATS1 product. The sequence is that of Cytochrome P450 monooxygenase FFUJ_09176 from Gibberella fujikuroi (strain CBS 195.34 / IMI 58289 / NRRL A-6831) (Bakanae and foot rot disease fungus).